Consider the following 433-residue polypeptide: Glutamate-1-semialdehyde 2,1-aminomutase (433 aa).

Lys-273 is modified (N6-(pyridoxal phosphate)lysine).

It belongs to the class-III pyridoxal-phosphate-dependent aminotransferase family. HemL subfamily. In terms of assembly, homodimer. Pyridoxal 5'-phosphate serves as cofactor.

It localises to the cytoplasm. It carries out the reaction (S)-4-amino-5-oxopentanoate = 5-aminolevulinate. The protein operates within porphyrin-containing compound metabolism; protoporphyrin-IX biosynthesis; 5-aminolevulinate from L-glutamyl-tRNA(Glu): step 2/2. It participates in porphyrin-containing compound metabolism; chlorophyll biosynthesis. This chain is Glutamate-1-semialdehyde 2,1-aminomutase, found in Crocosphaera subtropica (strain ATCC 51142 / BH68) (Cyanothece sp. (strain ATCC 51142)).